The following is a 901-amino-acid chain: Alpha-actinin-3 (901 aa).

M1 bears the N-acetylmethionine mark. The segment at 1 to 261 (MMMVMQPEGL…IMTYVSCFYH (261 aa)) is actin-binding. 2 consecutive Calponin-homology (CH) domains span residues 45–149 (KQQR…LRFA) and 158–264 (TSAK…HAFA). 4 Spectrin repeats span residues 288 to 398 (KLME…WLLS), 408 to 513 (HLAE…ALER), 523 to 634 (RLQL…TLQE), and 644 to 747 (RLRR…EVEN). EF-hand domains are found at residues 760-795 (EQLN…MGYD) and 796-831 (LGEV…ETAE). Ca(2+) contacts are provided by D773, N777, M779, D784, D809, and N811.

The protein belongs to the alpha-actinin family. Homodimer; antiparallel. Also forms heterodimers with ACTN2. Interacts with MYOZ1. As to expression, expression restricted to fast (type 2) skeletal muscle fibers (at protein level).

Functionally, F-actin cross-linking protein which is thought to anchor actin to a variety of intracellular structures. This is a bundling protein. The polypeptide is Alpha-actinin-3 (ACTN3) (Homo sapiens (Human)).